The chain runs to 251 residues: 1-(5-phosphoribosyl)-5-[(5-phosphoribosylamino)methylideneamino] imidazole-4-carboxamide isomerase (251 aa).

Residue D8 is the Proton acceptor of the active site. Residue D131 is the Proton donor of the active site.

It belongs to the HisA/HisF family.

Its subcellular location is the cytoplasm. It catalyses the reaction 1-(5-phospho-beta-D-ribosyl)-5-[(5-phospho-beta-D-ribosylamino)methylideneamino]imidazole-4-carboxamide = 5-[(5-phospho-1-deoxy-D-ribulos-1-ylimino)methylamino]-1-(5-phospho-beta-D-ribosyl)imidazole-4-carboxamide. Its pathway is amino-acid biosynthesis; L-histidine biosynthesis; L-histidine from 5-phospho-alpha-D-ribose 1-diphosphate: step 4/9. The polypeptide is 1-(5-phosphoribosyl)-5-[(5-phosphoribosylamino)methylideneamino] imidazole-4-carboxamide isomerase (Burkholderia cenocepacia (strain HI2424)).